Consider the following 207-residue polypeptide: Large ribosomal subunit protein bL25 (207 aa).

This sequence belongs to the bacterial ribosomal protein bL25 family. CTC subfamily. In terms of assembly, part of the 50S ribosomal subunit; part of the 5S rRNA/L5/L18/L25 subcomplex. Contacts the 5S rRNA. Binds to the 5S rRNA independently of L5 and L18.

In terms of biological role, this is one of the proteins that binds to the 5S RNA in the ribosome where it forms part of the central protuberance. In Azorhizobium caulinodans (strain ATCC 43989 / DSM 5975 / JCM 20966 / LMG 6465 / NBRC 14845 / NCIMB 13405 / ORS 571), this protein is Large ribosomal subunit protein bL25.